A 104-amino-acid polypeptide reads, in one-letter code: UPF0045 protein YqgV (104 aa).

The protein belongs to the UPF0045 family.

The polypeptide is UPF0045 protein YqgV (yqgV) (Bacillus subtilis (strain 168)).